Reading from the N-terminus, the 80-residue chain is Metallothionein-like protein type 2 (80 aa).

It belongs to the metallothionein superfamily. Type 15 family.

Functionally, metallothioneins have a high content of cysteine residues that bind various heavy metals. The protein is Metallothionein-like protein type 2 of Brassica campestris (Field mustard).